The sequence spans 159 residues: Endoribonuclease YbeY (159 aa).

Zn(2+) is bound by residues His-123, His-127, and His-133.

It belongs to the endoribonuclease YbeY family. Zn(2+) is required as a cofactor.

The protein localises to the cytoplasm. In terms of biological role, single strand-specific metallo-endoribonuclease involved in late-stage 70S ribosome quality control and in maturation of the 3' terminus of the 16S rRNA. The chain is Endoribonuclease YbeY from Bacillus pumilus (strain SAFR-032).